A 503-amino-acid chain; its full sequence is Cytochrome P450 7A1 (503 aa).

A helical membrane pass occupies residues Ile-4–Ile-24. A heme-binding site is contributed by Cys-444.

The protein belongs to the cytochrome P450 family. It depends on heme as a cofactor. Detected in liver (at protein level). Liver.

Its subcellular location is the endoplasmic reticulum membrane. It localises to the microsome membrane. It carries out the reaction cholesterol + reduced [NADPH--hemoprotein reductase] + O2 = 7alpha-hydroxycholesterol + oxidized [NADPH--hemoprotein reductase] + H2O + H(+). The catalysed reaction is 4beta-hydroxycholesterol + reduced [NADPH--hemoprotein reductase] + O2 = 4beta,7alpha-dihydroxycholesterol + oxidized [NADPH--hemoprotein reductase] + H2O + H(+). It catalyses the reaction lathosterol + reduced [NADPH--hemoprotein reductase] + O2 = 7alpha,8alpha-epoxy-5alpha-cholestan-3beta-ol + oxidized [NADPH--hemoprotein reductase] + H2O + H(+). The enzyme catalyses lathosterol + reduced [NADPH--hemoprotein reductase] + O2 = 5alpha-cholestan-7-oxo-3beta-ol + oxidized [NADPH--hemoprotein reductase] + H2O + H(+). It carries out the reaction 7-dehydrocholesterol + reduced [NADPH--hemoprotein reductase] + O2 = 7-oxocholesterol + oxidized [NADPH--hemoprotein reductase] + H2O + H(+). The catalysed reaction is (24S)-hydroxycholesterol + reduced [NADPH--hemoprotein reductase] + O2 = (24S)-7alpha-dihydroxycholesterol + oxidized [NADPH--hemoprotein reductase] + H2O + H(+). It catalyses the reaction (24R)-hydroxycholesterol + reduced [NADPH--hemoprotein reductase] + O2 = (24R)-7alpha-dihydroxycholesterol + oxidized [NADPH--hemoprotein reductase] + H2O + H(+). It functions in the pathway lipid metabolism; bile acid biosynthesis. It participates in steroid metabolism; cholesterol degradation. In terms of biological role, a cytochrome P450 monooxygenase involved in the metabolism of endogenous cholesterol and its oxygenated derivatives (oxysterols). Mechanistically, uses molecular oxygen inserting one oxygen atom into a substrate, and reducing the second into a water molecule, with two electrons provided by NADPH via cytochrome P450 reductase (CPR; NADPH-ferrihemoprotein reductase). Functions as a critical regulatory enzyme of bile acid biosynthesis and cholesterol homeostasis. Catalyzes the hydroxylation of carbon hydrogen bond at 7-alpha position of cholesterol, a rate-limiting step in cholesterol catabolism and bile acid biosynthesis. 7-alpha hydroxylates several oxysterols, including 4beta-hydroxycholesterol and 24-hydroxycholesterol. Catalyzes the oxidation of the 7,8 double bond of 7-dehydrocholesterol and lathosterol with direct and predominant formation of the 7-keto derivatives. The protein is Cytochrome P450 7A1 (Cyp7a1) of Rattus norvegicus (Rat).